A 179-amino-acid chain; its full sequence is Dual-action ribosomal maturation protein DarP (179 aa).

It belongs to the DarP family.

Its subcellular location is the cytoplasm. Functionally, member of a network of 50S ribosomal subunit biogenesis factors which assembles along the 30S-50S interface, preventing incorrect 23S rRNA structures from forming. Promotes peptidyl transferase center (PTC) maturation. The sequence is that of Dual-action ribosomal maturation protein DarP from Photorhabdus laumondii subsp. laumondii (strain DSM 15139 / CIP 105565 / TT01) (Photorhabdus luminescens subsp. laumondii).